Here is a 595-residue protein sequence, read N- to C-terminus: UvrABC system protein C (595 aa).

The region spanning 14–91 is the GIY-YIG domain; that stretch reads DSPGCYIHKD…IQENKPKYNI (78 aa). The UVR domain occupies 196–231; that stretch reads DKIVNELRDKMTKASELMEFERAAEYRDLIEGIGLL.

Belongs to the UvrC family. Interacts with UvrB in an incision complex.

It localises to the cytoplasm. Functionally, the UvrABC repair system catalyzes the recognition and processing of DNA lesions. UvrC both incises the 5' and 3' sides of the lesion. The N-terminal half is responsible for the 3' incision and the C-terminal half is responsible for the 5' incision. This chain is UvrABC system protein C, found in Streptococcus mutans serotype c (strain ATCC 700610 / UA159).